The sequence spans 1052 residues: Error-prone DNA polymerase (1052 aa).

Belongs to the DNA polymerase type-C family. DnaE2 subfamily.

It is found in the cytoplasm. It catalyses the reaction DNA(n) + a 2'-deoxyribonucleoside 5'-triphosphate = DNA(n+1) + diphosphate. DNA polymerase involved in damage-induced mutagenesis and translesion synthesis (TLS). It is not the major replicative DNA polymerase. The sequence is that of Error-prone DNA polymerase from Bordetella bronchiseptica (strain ATCC BAA-588 / NCTC 13252 / RB50) (Alcaligenes bronchisepticus).